A 163-amino-acid chain; its full sequence is Sperm acrosome membrane-associated protein 3 (163 aa).

An N-terminal signal peptide occupies residues 1 to 35; the sequence is MEAGSWAPRRWPRPPGIVLLALASVLSSLLSSGQA. A C-type lysozyme domain is found at 36–163; sequence RVYSRCELAR…LSDWVDGCEL (128 aa). 4 disulfides stabilise this stretch: C41-C161, C65-C149, C99-C114, and C110-C128.

The protein belongs to the glycosyl hydrolase 22 family. In terms of assembly, interacts with ASTL.

The protein resides in the secreted. In terms of biological role, sperm surface membrane protein that may be involved in sperm-egg plasma membrane adhesion and fusion during fertilization. It could be a potential receptor for the egg oligosaccharide residue N-acetylglucosamine, which is present in the extracellular matrix over the egg plasma membrane. The processed form has no detectable bacteriolytic activity in vitro. This chain is Sperm acrosome membrane-associated protein 3 (SPACA3), found in Bos taurus (Bovine).